The sequence spans 503 residues: DEAD-box ATP-dependent RNA helicase CshA (503 aa).

A Q motif motif is present at residues 2-30; the sequence is QNFKELGISDKTVETLEAMGFKEPTPIQK. The Helicase ATP-binding domain occupies 33-203; sequence IPYTLEGKDI…QQFMKSPQIV (171 aa). ATP is bound at residue 46-53; it reads AQTGTGKT. Residues 150–153 carry the DEAD box motif; sequence DEAD. The 162-residue stretch at 214 to 375 folds into the Helicase C-terminal domain; the sequence is QIDEYYTIVK…LRPPHRKEVL (162 aa). The segment at 436–503 is disordered; it reads EKPLARKNRQ…KGRTFADLQK (68 aa). Positions 466 to 480 are enriched in basic residues; the sequence is KRSKGNFNKKKGKKT. Over residues 481–490 the composition is skewed to basic and acidic residues; sequence DRRERQDKGR.

Belongs to the DEAD box helicase family. CshA subfamily. Oligomerizes, may be a member of the RNA degradosome.

The protein localises to the cytoplasm. The catalysed reaction is ATP + H2O = ADP + phosphate + H(+). Its function is as follows. DEAD-box RNA helicase possibly involved in RNA degradation. Unwinds dsRNA in both 5'- and 3'-directions, has RNA-dependent ATPase activity. This is DEAD-box ATP-dependent RNA helicase CshA from Staphylococcus haemolyticus (strain JCSC1435).